The chain runs to 348 residues: GTPase Obg (348 aa).

An Obg domain is found at 1-159 (MKFLDLAKVY…RTIWLRLKLI (159 aa)). Residues 160-327 (ADAGLLGLPN…VLRAVRAEID (168 aa)) enclose the OBG-type G domain. GTP-binding positions include 166–173 (GLPNAGKS), 191–195 (FTTLH), 212–215 (DIPG), 279–282 (NKID), and 308–310 (SSV). Residues S173 and T193 each coordinate Mg(2+).

This sequence belongs to the TRAFAC class OBG-HflX-like GTPase superfamily. OBG GTPase family. In terms of assembly, monomer. The cofactor is Mg(2+).

Its subcellular location is the cytoplasm. An essential GTPase which binds GTP, GDP and possibly (p)ppGpp with moderate affinity, with high nucleotide exchange rates and a fairly low GTP hydrolysis rate. Plays a role in control of the cell cycle, stress response, ribosome biogenesis and in those bacteria that undergo differentiation, in morphogenesis control. In Ruegeria sp. (strain TM1040) (Silicibacter sp.), this protein is GTPase Obg.